A 459-amino-acid polypeptide reads, in one-letter code: tRNA modification GTPase MnmE (459 aa).

(6S)-5-formyl-5,6,7,8-tetrahydrofolate contacts are provided by Arg22, Glu85, and Arg124. Residues 221-380 (GLSTVIVGKP…LEIQIRDLFF (160 aa)) enclose the TrmE-type G domain. K(+) is bound at residue Asn231. Residues 231–236 (NVGKSS), 250–256 (TEVAGTT), and 275–278 (DTAG) each bind GTP. Ser235 provides a ligand contact to Mg(2+). Residues Thr250, Val252, and Thr255 each contribute to the K(+) site. Mg(2+) is bound at residue Thr256. Lys459 serves as a coordination point for (6S)-5-formyl-5,6,7,8-tetrahydrofolate.

This sequence belongs to the TRAFAC class TrmE-Era-EngA-EngB-Septin-like GTPase superfamily. TrmE GTPase family. As to quaternary structure, homodimer. Heterotetramer of two MnmE and two MnmG subunits. It depends on K(+) as a cofactor.

It is found in the cytoplasm. Functionally, exhibits a very high intrinsic GTPase hydrolysis rate. Involved in the addition of a carboxymethylaminomethyl (cmnm) group at the wobble position (U34) of certain tRNAs, forming tRNA-cmnm(5)s(2)U34. The sequence is that of tRNA modification GTPase MnmE from Staphylococcus aureus (strain MSSA476).